The sequence spans 430 residues: Dynactin subunit 2 (430 aa).

2 disordered regions span residues 1–51 (MSEG…IDRS) and 201–228 (SLSS…SSSS). The span at 32-44 (SISNLADESSELV) shows a compositional bias: polar residues. Coiled coils occupy residues 241–319 (TGEQ…QDET) and 397–430 (DDSF…QQQQ).

The protein belongs to the dynactin subunit 2 family. As to quaternary structure, subunit of dynactin, a multiprotein complex associated with dynein.

Its subcellular location is the cytoplasm. The protein localises to the cytoskeleton. It is found in the membrane. Modulates cytoplasmic dynein binding to an organelle, and plays a role in prometaphase chromosome alignment and spindle organization during mitosis. This Dictyostelium discoideum (Social amoeba) protein is Dynactin subunit 2 (dynB).